The primary structure comprises 150 residues: Galactose-binding lectin (150 aa).

Positions 16 and 19 each coordinate D-galactose. N26 carries an N-linked (GlcNAc...) asparagine glycan. D-galactose is bound by residues D27, 35 to 37 (DIH), H64, and G67. N74 is a glycosylation site (N-linked (GlcNAc...) asparagine). Residues E75, 83-85 (DRH), H108, and G111 each bind D-galactose. Residue N118 is glycosylated (N-linked (GlcNAc...) asparagine). D-galactose contacts are provided by residues E119 and 127-129 (DKH).

Homodimer. Likely to form large oligomers; oligomerization enhances hemagglutination activity. Glycosylated.

Hemagglutination activity is not dependent on divalent cations. Hemagglutination activity is highly inhibited by D-galactose and N-acetyl-D-galactosamine, and to a lesser extent by raffinose. Also inhibited by melibiose and alpha-lactose, but not by beta-lactose or D-glucose. Its function is as follows. D-galactose-binding lectin. Also binds N-acetyl-D-galactosamine. Has hemagglutination activity towards all types of human erythrocytes (O, A and B) and rabbit erythrocytes. Agglutinates Gram-negative and Gram-positive bacteria including E.coli DH5-alpha and L.plantarum ATCC8014, respectively, and has bacteriostatic activity against them. Also agglutinates M.lysodeikticus. May be involved in innate immunity by recognizing and eliminating pathogens. The chain is Galactose-binding lectin from Mytilus californianus (California mussel).